Reading from the N-terminus, the 184-residue chain is Calmodulin-related protein (184 aa).

EF-hand domains follow at residues 8-43 (DQISEFKEAFSLFDKDGDGCITTKELGTVMRSLGQN), 44-79 (PTEAELQDMINEVDADGNGTIDFPEFLNLMARKMKD), 81-116 (DSEEELKEAFRVFDKDQNGFISAAELRHVMTNLGEK), and 117-152 (LTDEEVDEMIREADVDGDGQINYEEFVKVMMANRRR). 14 residues coordinate Ca(2+): Asp21, Asp23, Asp25, Cys27, Glu32, Asp57, Asp59, Asn61, Thr63, Glu68, Asp94, Asp96, Asn98, and Glu105. Lys116 is modified (N6,N6,N6-trimethyllysine). Ca(2+)-binding residues include Asp130, Asp132, Asp134, Gln136, and Glu141. Residues 156–184 (EESKRSVNSNISRSNNGRKVRKRDRCTIL) are disordered. Over residues 161-170 (SVNSNISRSN) the composition is skewed to low complexity. Residues 171–184 (NGRKVRKRDRCTIL) are compositionally biased toward basic residues.

This sequence belongs to the calmodulin family.

Calmodulin mediates the control of a large number of enzymes, ion channels and other proteins by Ca(2+). Among the enzymes to be stimulated by the calmodulin-Ca(2+) complex are a number of protein kinases and phosphatases. The sequence is that of Calmodulin-related protein (CAM53) from Petunia hybrida (Petunia).